We begin with the raw amino-acid sequence, 454 residues long: tRNA modification GTPase MnmE (454 aa).

Residues Arg-23, Glu-80, and Lys-120 each contribute to the (6S)-5-formyl-5,6,7,8-tetrahydrofolate site. Residues 216–377 (GMKVVIAGRP…LRNHLKQSMG (162 aa)) form the TrmE-type G domain. Asn-226 provides a ligand contact to K(+). GTP contacts are provided by residues 226–231 (NAGKSS), 245–251 (TDIAGTT), 270–273 (DTAG), 335–338 (NKAD), and 358–360 (SAR). A Mg(2+)-binding site is contributed by Ser-230. Thr-245, Ile-247, and Thr-250 together coordinate K(+). A Mg(2+)-binding site is contributed by Thr-251. Lys-454 is a binding site for (6S)-5-formyl-5,6,7,8-tetrahydrofolate.

It belongs to the TRAFAC class TrmE-Era-EngA-EngB-Septin-like GTPase superfamily. TrmE GTPase family. As to quaternary structure, homodimer. Heterotetramer of two MnmE and two MnmG subunits. K(+) serves as cofactor.

The protein localises to the cytoplasm. Its function is as follows. Exhibits a very high intrinsic GTPase hydrolysis rate. Involved in the addition of a carboxymethylaminomethyl (cmnm) group at the wobble position (U34) of certain tRNAs, forming tRNA-cmnm(5)s(2)U34. The sequence is that of tRNA modification GTPase MnmE from Shigella flexneri serotype 5b (strain 8401).